A 156-amino-acid chain; its full sequence is Transcription elongation factor GreA (156 aa).

Residues 45–66 (NAEYHSAKEKQSFIEGRIKELE) are a coiled coil.

Belongs to the GreA/GreB family.

Necessary for efficient RNA polymerase transcription elongation past template-encoded arresting sites. The arresting sites in DNA have the property of trapping a certain fraction of elongating RNA polymerases that pass through, resulting in locked ternary complexes. Cleavage of the nascent transcript by cleavage factors such as GreA or GreB allows the resumption of elongation from the new 3'terminus. GreA releases sequences of 2 to 3 nucleotides. The polypeptide is Transcription elongation factor GreA (Jannaschia sp. (strain CCS1)).